The sequence spans 592 residues: Transmembrane 9 superfamily member 3 (592 aa).

Positions 1–19 (MRLPTTLLLFIGALIFSGA) are cleaved as a signal peptide. Topologically, residues 20–229 (GTVRSDASDH…SLPHHLEIHW (210 aa)) are lumenal. The chain crosses the membrane as a helical span at residues 230-250 (FSIINSCVTVLLLTGFLATIL). At 251–302 (MRVLKNDFMKYAQDEEAADDQEETGWKYIHGDVFRFPKNKSLFAASLGSGTQ) the chain is on the cytoplasmic side. The helical transmembrane segment at 303–323 (LFTLTIFIFMLSLVGVFYPYN) threads the bilayer. Over 324–325 (RG) the chain is Lumenal. The helical transmembrane segment at 326–346 (ALFTALVVIYALTSGIAGYTA) threads the bilayer. The Cytoplasmic segment spans residues 347–365 (SSFYCQLEGKNWVRNLLLT). The helical transmembrane segment at 366-386 (GGLFCGPLFLTFCFLNTVAIA) threads the bilayer. Residues 387–397 (YSATAALPFGT) are Lumenal-facing. Residues 398 to 418 (IIVIVLIWTLVTSPLLVLGGI) traverse the membrane as a helical segment. The Cytoplasmic portion of the chain corresponds to 419–452 (AGKNSKAEFQAPVRTTKYPREIPPLPWYRSAVPQ). Residues 453-473 (MAMAGFLPFSAIYIELYYIFA) form a helical membrane-spanning segment. Topologically, residues 474–485 (SVWGHRIYTIYS) are lumenal. The chain crosses the membrane as a helical span at residues 486–506 (ILFIVFIILLIVTAFITVALT). The Cytoplasmic portion of the chain corresponds to 507–521 (YFQLAAEDHEWWWRS). Residues 522–542 (FLCGGSTGLFIYAYCLYYYYA) form a helical membrane-spanning segment. The Lumenal portion of the chain corresponds to 543 to 553 (RSDMSGFMQTS). The helical transmembrane segment at 554-574 (FFFGYMACICYGFFLMLGTVG) threads the bilayer. Over 575-592 (FRAALLFVRHIYRSIKCE) the chain is Cytoplasmic. The short motif at 581-586 (FVRHIY) is the Endoplasmic reticulum export signal element. The short motif at 590–592 (KCE) is the Golgi retention signal element.

This sequence belongs to the nonaspanin (TM9SF) (TC 9.A.2) family.

The protein localises to the endosome membrane. It localises to the golgi apparatus membrane. This is Transmembrane 9 superfamily member 3 from Arabidopsis thaliana (Mouse-ear cress).